Here is a 125-residue protein sequence, read N- to C-terminus: Cu-Zn superoxide dismutase-like protein (125 aa).

A disulfide bond links Cys52 and Cys102.

The protein belongs to the Cu-Zn superoxide dismutase family.

Its subcellular location is the host cytoplasm. Its function is as follows. Virion protein with no enzymatic activity. The protein is Cu-Zn superoxide dismutase-like protein of Camelpox virus (strain M-96).